The sequence spans 37 residues: Large ribosomal subunit protein bL36 (37 aa).

Belongs to the bacterial ribosomal protein bL36 family.

The protein is Large ribosomal subunit protein bL36 (rpmJ) of Mycobacterium tuberculosis (strain ATCC 25618 / H37Rv).